We begin with the raw amino-acid sequence, 124 residues long: Small ribosomal subunit protein uS12 (124 aa).

Asp-89 is subject to 3-methylthioaspartic acid. The segment at 103-124 (DTAGVKDRRQSRSKYGAKSPKE) is disordered.

It belongs to the universal ribosomal protein uS12 family. Part of the 30S ribosomal subunit. Contacts proteins S8 and S17. May interact with IF1 in the 30S initiation complex.

With S4 and S5 plays an important role in translational accuracy. Functionally, interacts with and stabilizes bases of the 16S rRNA that are involved in tRNA selection in the A site and with the mRNA backbone. Located at the interface of the 30S and 50S subunits, it traverses the body of the 30S subunit contacting proteins on the other side and probably holding the rRNA structure together. The combined cluster of proteins S8, S12 and S17 appears to hold together the shoulder and platform of the 30S subunit. This Prochlorococcus marinus (strain NATL2A) protein is Small ribosomal subunit protein uS12.